The chain runs to 118 residues: NLIQFSQLIQCANKGKRPTLHYMDYGCYCGPGGSGTPVDDLDRCCKTNDDCYGQAEKKGCSPLSTNYNFDCFPGGPQCGKGTTCQRFVCDCDLKAALCFAKSPYNNKNFNIDTKKRCK.

7 disulfide bridges follow: C11–C71, C27–C117, C29–C45, C44–C98, C51–C91, C60–C84, and C78–C89. Residues 106–118 (NKNFNIDTKKRCK) form an important for membrane-damaging activities in eukaryotes and bacteria; heparin-binding region.

The protein belongs to the phospholipase A2 family. Group I subfamily. D49 sub-subfamily. In terms of tissue distribution, expressed by the venom gland.

It localises to the secreted. The polypeptide is Basic phospholipase A2 homolog 1 (Laticauda colubrina (Yellow-lipped sea krait)).